Reading from the N-terminus, the 1174-residue chain is Male determiner protein Mdmd(V) (1174 aa).

The segment covering Met1–Pro15 has biased composition (basic and acidic residues). 3 disordered regions span residues Met1–Arg51, Arg79–Leu110, and Lys136–Ser259. A compositionally biased stretch (low complexity) spans Ser16–Ser35. Polar residues predominate over residues Lys36–Leu47. The segment covering Arg79–Ser92 has biased composition (basic and acidic residues). A compositionally biased stretch (polar residues) spans Ile93–Asp102. The segment covering Leu138–Ser153 has biased composition (low complexity). Residues Ser167 to Ser180 are compositionally biased toward basic residues. Positions His183–Asn200 are enriched in basic and acidic residues. Over residues Arg201–Glu223 the composition is skewed to basic residues. A compositionally biased stretch (basic and acidic residues) spans Arg235–Ser259. An MIF4G domain is found at Lys348–Gly531. Positions Asp597–Ser608 are enriched in low complexity. The tract at residues Asp597–Asp616 is disordered. Residues Ala641–Leu757 form the MI domain. Over residues Ser840–Pro857 the composition is skewed to low complexity. Disordered regions lie at residues Ser840 to Lys1045 and Arg1095 to Arg1133. The span at Lys869 to Lys909 shows a compositional bias: basic residues. The span at Arg910 to Leu924 shows a compositional bias: basic and acidic residues. The segment covering Ser926–Asp957 has biased composition (low complexity). A compositionally biased stretch (basic residues) spans Lys963–Lys1001. Positions Ser1010–Ser1020 are enriched in low complexity. Positions Arg1034–Lys1045 are enriched in basic residues. Basic and acidic residues predominate over residues Arg1095–Arg1118. Over residues Arg1119–Asn1130 the composition is skewed to basic residues.

This sequence belongs to the CWC22 family. As to quaternary structure, component of the spliceosome C complex.

It is found in the nucleus speckle. Male determiner protein (M-factor) that controls male somatic sexual differentiation. Acts as a dominant factor that regulates the mRNA splicing of transformer (tra) and doublesex (dsx) transcripts and promotes expression of male splice forms of tra and dsx. Probably acts as a component of the spliceosome C complex required for mRNA splicing factor and exon-junction complex (EJC) assembly. Hinders eIF4AIII from non-specifically binding RNA and escorts it to the splicing machinery to promote EJC assembly on mature mRNAs. The polypeptide is Male determiner protein Mdmd(V) (Musca domestica (House fly)).